The sequence spans 466 residues: Tyrosinase HcTyr1 (466 aa).

Positions 43, 78, 87, 211, 215, and 238 each coordinate Cu cation.

This sequence belongs to the tyrosinase family. Monomer. Formation of a dimer is observed when the protein is in its holo-form. Requires Cu(2+) as cofactor. In terms of processing, in vitro, the C-terminal lid-domain is slowly cleaved off in an autoprocessive time dependent manner, leading to the formation of cleaved-HcTyr1. The processing rate is not influenced by factors such as pH and added metal ions.

The catalysed reaction is L-tyrosine + O2 = L-dopaquinone + H2O. It carries out the reaction 2 L-tyrosine + O2 = 2 L-dopa. The enzyme catalyses 2 L-dopa + O2 = 2 L-dopaquinone + 2 H2O. Cleavage of the lid-domain increases activity levels, affinity for substrate and turnover rate. Exhibits high saline tolerance. Functionally, copper-containing oxidase that catalyzes the conversion of L-tyrosine to L-dopa and then to L-dopaquinone. Can use various phenols such as p-coumaric acid, phenol, pyrocatechol, syringol or pyrogallol. Accepts several of the constituents of lignin and potentially participates in lignin functionalization. The sequence is that of Tyrosinase HcTyr1 from Hahella sp. (strain CCB-MM4).